The primary structure comprises 137 residues: Integration host factor subunit beta (137 aa).

The span at 75 to 92 (KRVPHFKAGKELRERVDR) shows a compositional bias: basic and acidic residues. The tract at residues 75–137 (KRVPHFKAGK…EGGGLNLARS (63 aa)) is disordered. Over residues 128–137 (EGGGLNLARS) the composition is skewed to gly residues.

The protein belongs to the bacterial histone-like protein family. Heterodimer of an alpha and a beta chain.

In terms of biological role, this protein is one of the two subunits of integration host factor, a specific DNA-binding protein that functions in genetic recombination as well as in transcriptional and translational control. This Cupriavidus pinatubonensis (strain JMP 134 / LMG 1197) (Cupriavidus necator (strain JMP 134)) protein is Integration host factor subunit beta.